A 616-amino-acid polypeptide reads, in one-letter code: Spastin (616 aa).

Residues 1–44 (MNSPGGRGKKKGSGGPSSPVPPRPPPPCLASSRPAPRPAPPPQS) are disordered. Residues 1-50 (MNSPGGRGKKKGSGGPSSPVPPRPPPPCLASSRPAPRPAPPPQSPHKRNL) form a required for nuclear localization region. The Cytoplasmic segment spans residues 1–56 (MNSPGGRGKKKGSGGPSSPVPPRPPPPCLASSRPAPRPAPPPQSPHKRNLYYFSYP). The segment at 1 to 80 (MNSPGGRGKK…LGLLFVWLCQ (80 aa)) is required for interaction with ATL1. The required for midbody localization stretch occupies residues 1 to 194 (MNSPGGRGKK…LVMAKDRLQL (194 aa)). The required for interaction with RTN1 stretch occupies residues 1–300 (MNSPGGRGKK…STPKTNRTNK (300 aa)). The Nuclear localization signal motif lies at 4–11 (PGGRGKKK). 2 stretches are compositionally biased toward pro residues: residues 18–28 (SPVPPRPPPPC) and 35–44 (APRPAPPPQS). Residues 50 to 87 (LYYFSYPLFLGFALLRLVAFHLGLLFVWLCQRFSRALM) form a required for interaction with SSNA1 and microtubules region. The helical intramembrane region spans 57 to 77 (LFLGFALLRLVAFHLGLLFVW). Positions 59–67 (LGFALLRLV) match the Nuclear export signal motif. Over 78 to 616 (LCQRFSRALM…WNKDFGDTTV (539 aa)) the chain is Cytoplasmic. The interval 112–196 (EVERVRAFHK…MAKDRLQLLE (85 aa)) is sufficient for interaction with CHMP1B. The segment at 114–200 (ERVRAFHKQA…RLQLLEKLQP (87 aa)) is required for interaction with microtubules. An MIT domain is found at 120 to 195 (HKQAFEYISV…VMAKDRLQLL (76 aa)). Residues 223 to 266 (GHLQSESGAVPKRKDPLTHPSNSLPRSKAIMKTGSTGLSGHHRA) form a disordered region. The segment at 226 to 328 (QSESGAVPKR…NVDSNLANFI (103 aa)) is sufficient for interaction with microtubules. The sufficient for microtubule severing stretch occupies residues 228 to 616 (ESGAVPKRKD…WNKDFGDTTV (389 aa)). Phosphoserine is present on residues Ser-245 and Ser-268. Residues 270 to 328 (SGLSIVSGMRQGPGPTTATHKSTPKTNRTNKPSTPTTAPRKKKDLKNFRNVDSNLANFI) are required for interaction with microtubules and microtubule severing. The segment at 278-311 (MRQGPGPTTATHKSTPKTNRTNKPSTPTTAPRKK) is disordered. Over residues 283-306 (GPTTATHKSTPKTNRTNKPSTPTT) the composition is skewed to polar residues. A Phosphothreonine modification is found at Thr-306. The short motif at 309-312 (RKKK) is the Nuclear localization signal element. Positions 310–312 (KKK) are required for interaction with microtubules. 382–389 (GPPGNGKT) serves as a coordination point for ATP. A Phosphoserine modification is found at Ser-597.

Belongs to the AAA ATPase family. Spastin subfamily. Homohexamer. Mostly monomeric, but assembles into hexameric structure for short periods of time. Oligomerization seems to be a prerequisite for catalytic activity. Binding to ATP in a cleft between two adjacent subunits stabilizes the homohexameric form. Binds to microtubules at least in part via the alpha-tubulin and beta-tubulin tails. The hexamer adopts a ring conformation through which microtubules pass prior to being severed. Does not interact strongly with tubulin heterodimers. Interacts (via MIT domain) with CHMP1B; the interaction is direct. Interacts with SSNA1. Interacts with ATL1. Interacts with RTN1. Interacts with ZFYVE27. Interacts with REEP1. Interacts (via MIT domain) with IST1.

Its subcellular location is the membrane. It localises to the endoplasmic reticulum. It is found in the midbody. The protein localises to the cytoplasm. The protein resides in the cytoskeleton. Its subcellular location is the microtubule organizing center. It localises to the centrosome. It is found in the perinuclear region. The protein localises to the nucleus. The protein resides in the spindle. Its subcellular location is the cell projection. It localises to the axon. It catalyses the reaction n ATP + n H2O + a microtubule = n ADP + n phosphate + (n+1) alpha/beta tubulin heterodimers.. Its activity is regulated as follows. Allosteric enzyme with a cooperative mechanism; at least two neighbor subunits influence each other strongly in spastin hexamers. Microtubule binding promotes cooperative interactions among spastin subunits. ATP-dependent microtubule severing protein that specifically recognizes and cuts microtubules that are polyglutamylated. Preferentially recognizes and acts on microtubules decorated with short polyglutamate tails: severing activity increases as the number of glutamates per tubulin rises from one to eight, but decreases beyond this glutamylation threshold. Severing activity is not dependent on tubulin acetylation or detyrosination. Microtubule severing promotes reorganization of cellular microtubule arrays and the release of microtubules from the centrosome following nucleation. It is critical for the biogenesis and maintenance of complex microtubule arrays in axons, spindles and cilia. SPAST is involved in abscission step of cytokinesis and nuclear envelope reassembly during anaphase in cooperation with the ESCRT-III complex. Recruited at the midbody, probably by IST1, and participates in membrane fission during abscission together with the ESCRT-III complex. Recruited to the nuclear membrane by IST1 and mediates microtubule severing, promoting nuclear envelope sealing and mitotic spindle disassembly during late anaphase. Required for membrane traffic from the endoplasmic reticulum (ER) to the Golgi and endosome recycling. Recruited by IST1 to endosomes and regulates early endosomal tubulation and recycling by mediating microtubule severing. Probably plays a role in axon growth and the formation of axonal branches. This Sus scrofa (Pig) protein is Spastin.